We begin with the raw amino-acid sequence, 306 residues long: Aquaporin-1 (306 aa).

Polar residues predominate over residues 1 to 23; sequence MASTHSSLTTVQNNANNKSNRTL. The disordered stretch occupies residues 1–24; that stretch reads MASTHSSLTTVQNNANNKSNRTLN. At 1–59 the chain is on the cytoplasmic side; it reads MASTHSSLTTVQNNANNKSNRTLNTERRLSMESSVFTLYNKAADELDTSQRSAFQACHR. Residues 60-80 form a helical membrane-spanning segment; the sequence is EFLAEFIGTVILVLLTCGFCA. Residues 81-92 lie on the Extracellular side of the membrane; the sequence is EQTLHIEESKSW. The chain crosses the membrane as a helical span at residues 93–113; sequence LTSSFGSGLSVLIGICVSGHV. Residues 114–145 are Cytoplasmic-facing; the sequence is SGAHLNPAVTIAFCIFSGFPIRKVPSYITAQL. The NPA 1 motif lies at 119–121; that stretch reads NPA. Residues 146 to 166 form a helical membrane-spanning segment; the sequence is LGAFAGAALLYIIIEPAIVQF. Residues 167-192 lie on the Extracellular side of the membrane; the sequence is DGGQRYILGEKSTAGIFGTYPPLYVG. Residues 193–213 form a helical membrane-spanning segment; that stretch reads IGSAIASEIMGTAMLLLVIMV. At 214 to 226 the chain is on the cytoplasmic side; it reads TGHPNNLPYKSAQ. A helical membrane pass occupies residues 227–247; it reads GAMIALGITTISLCIGYTSGF. Residues 248-278 lie on the Extracellular side of the membrane; the sequence is SLNPARDFGPRLFTAIAGWGFDVFKVYHYYA. Positions 250 to 252 match the NPA 2 motif; sequence NPA. The chain crosses the membrane as a helical span at residues 279–299; that stretch reads LVPMFAPILGGLVGLMLMMPF. Residues 300–306 lie on the Cytoplasmic side of the membrane; it reads SFLSVRA.

This sequence belongs to the MIP/aquaporin (TC 1.A.8) family.

It localises to the cell membrane. It carries out the reaction H2O(in) = H2O(out). Functionally, water channel required to facilitate the transport of water across membranes. Contributes to water uptake of spores during the early stages of spore germination. Aquaporins AQP1 and AQP2 act as extracellular pH sensors and enable the spores to hydrate under favorable conditions and to commence germination. Wounded vegetables and fruit present acidic pH, so the optimal pH range for germination is adapted to the relevant host pH. This chain is Aquaporin-1, found in Rhizopus delemar (strain RA 99-880 / ATCC MYA-4621 / FGSC 9543 / NRRL 43880) (Mucormycosis agent).